The following is a 911-amino-acid chain: DNA mismatch repair protein MutS (911 aa).

A compositionally biased stretch (basic and acidic residues) spans 1–10 (MDNKTDHKND). The interval 1 to 24 (MDNKTDHKNDLNSQPVPSSAPHKE) is disordered. 662-669 (GPNMGGKS) provides a ligand contact to ATP.

It belongs to the DNA mismatch repair MutS family.

In terms of biological role, this protein is involved in the repair of mismatches in DNA. It is possible that it carries out the mismatch recognition step. This protein has a weak ATPase activity. This chain is DNA mismatch repair protein MutS, found in Bartonella quintana (strain Toulouse) (Rochalimaea quintana).